The following is a 258-amino-acid chain: Global transcriptional regulator CodY (258 aa).

The interval 1-156 (MSSLLEKTRQ…SATIIGLEIL (156 aa)) is GAF domain. The segment at residues 204–223 (ASKIADKVGITRSVIVNALR) is a DNA-binding region (H-T-H motif).

The protein belongs to the CodY family.

The protein resides in the cytoplasm. DNA-binding global transcriptional regulator which is involved in the adaptive response to starvation and acts by directly or indirectly controlling the expression of numerous genes in response to nutrient availability. During rapid exponential growth, CodY is highly active and represses genes whose products allow adaptation to nutrient depletion. The protein is Global transcriptional regulator CodY of Clostridium tetani (strain Massachusetts / E88).